The sequence spans 152 residues: Ribosome maturation factor RimP (152 aa).

Belongs to the RimP family.

It localises to the cytoplasm. Its function is as follows. Required for maturation of 30S ribosomal subunits. The sequence is that of Ribosome maturation factor RimP from Alkaliphilus metalliredigens (strain QYMF).